Reading from the N-terminus, the 875-residue chain is Alanine--tRNA ligase (875 aa).

Zn(2+) is bound by residues His-564, His-568, Cys-666, and His-670.

Belongs to the class-II aminoacyl-tRNA synthetase family. Requires Zn(2+) as cofactor.

It localises to the cytoplasm. It carries out the reaction tRNA(Ala) + L-alanine + ATP = L-alanyl-tRNA(Ala) + AMP + diphosphate. Catalyzes the attachment of alanine to tRNA(Ala) in a two-step reaction: alanine is first activated by ATP to form Ala-AMP and then transferred to the acceptor end of tRNA(Ala). Also edits incorrectly charged Ser-tRNA(Ala) and Gly-tRNA(Ala) via its editing domain. This chain is Alanine--tRNA ligase, found in Mannheimia succiniciproducens (strain KCTC 0769BP / MBEL55E).